We begin with the raw amino-acid sequence, 336 residues long: 4-aminobenzoate N-oxygenase (336 aa).

Tyrosine 93 contributes to the 4-nitrobenzoate binding site. The Fe cation site is built by glutamate 101, glutamate 136, histidine 139, and glutamate 196. Asparagine 200 lines the 4-nitrobenzoate pocket. 3 residues coordinate Fe cation: histidine 223, glutamate 227, and histidine 230.

Belongs to the AurF N-oxygenase family. In terms of assembly, homodimer. Fe(2+) serves as cofactor.

It carries out the reaction 4-aminobenzoate + AH2 + 2 O2 = 4-nitrobenzoate + A + 2 H2O. It functions in the pathway antibiotic biosynthesis. In terms of biological role, involved in the biosynthesis of the polyketide antibiotic aureothin. Catalyzes the oxidation of p-aminobenzoate (pABA) to p-nitrobenzoate (pNBA), an unusual polyketide synthase starter unit. Reaction mechanism involves the generation of a peroxodiiron(III/III) intermediate, which effects the initial oxidation of p-aminobenzoate to p-hydroxylaminobenzoate (Ar-NHOH). Ar-NHOH is then probably directly converted to the fully oxidized p-nitrobenzoate via a four-electron N-oxidation, bypassing the formation of a nitroso compound. The protein is 4-aminobenzoate N-oxygenase of Streptomyces thioluteus.